The following is a 393-amino-acid chain: Elongation factor Tu (393 aa).

Residues 6-204 (KPHINVGTIG…ALEKIELPMR (199 aa)) form the tr-type G domain. The segment at 15-22 (GHVDHGKT) is G1. GTP is bound at residue 15–22 (GHVDHGKT). Position 22 (Thr-22) interacts with Mg(2+). Residues 58-62 (GITIS) are G2. The segment at 79-82 (DCPG) is G3. Residues 79 to 83 (DCPGH) and 134 to 137 (NKCD) each bind GTP. Residues 134 to 137 (NKCD) form a G4 region. The interval 172–174 (SAV) is G5.

This sequence belongs to the TRAFAC class translation factor GTPase superfamily. Classic translation factor GTPase family. EF-Tu/EF-1A subfamily. In terms of assembly, monomer.

The protein localises to the cytoplasm. It catalyses the reaction GTP + H2O = GDP + phosphate + H(+). Functionally, GTP hydrolase that promotes the GTP-dependent binding of aminoacyl-tRNA to the A-site of ribosomes during protein biosynthesis. This is Elongation factor Tu from Anaplasma phagocytophilum (strain HZ).